Here is a 525-residue protein sequence, read N- to C-terminus: uncharacterized protein (525 aa).

Ser-55 carries the phosphoserine modification. The next 13 membrane-spanning stretches (helical) occupy residues 81–101 (AYIVLLSTSLQMYVFWTPNFY), 120–140 (LLGQSMFVLGVALGPLFLGPL), 147–167 (KLVYIGSLIIYVCFCISCALA), 173–193 (LVISMLIMGVVGSTALGNVAG), 208–228 (MYMFIFMCSVASVGSPMGTGV), 238–258 (WLYWIDVIVGGFFIILFVFTP), 295–315 (FVFFMAIKIFFSEPIVSSLGI), 318–338 (GFVNGLLYFFLQAIWPVYFSI), 350–370 (YMAAMPACVILLWFEPLQCWL), 388–408 (FIMTLFYVWGFPIGIFMFAFC), 413–433 (IHYIVSLIGLTIFNIADYHIW), 454–474 (AFELPSNLGAVGFIHLSALMF), and 484–504 (AVVGFASLPLIALIYALYFYG).

It belongs to the major facilitator superfamily. CAR1 family.

The protein localises to the membrane. This is an uncharacterized protein from Schizosaccharomyces pombe (strain 972 / ATCC 24843) (Fission yeast).